A 20-amino-acid polypeptide reads, in one-letter code: Equinatoxin-1'' (20 aa).

Positions 3–12 (AVAGAVIEGA) are plays an important role in the hemolytic activity. The N-terminal region stretch occupies residues 11–20 (GATLTFNVLQ).

Belongs to the actinoporin family. Sea anemone subfamily. Octamer or nonamer in membranes. Monomer in the soluble state.

It is found in the secreted. It localises to the nematocyst. Its subcellular location is the target cell membrane. Pore-forming protein that forms cations-selective hydrophilic pores of around 1 nm and causes cardiac stimulation and cytolysis. Pore formation is a multi-step process that involves specific recognition of membrane sphingomyelin (but neither cholesterol nor phosphatidylcholine) using aromatic rich region and adjacent phosphocholine (POC) binding site, firm binding to the membrane (mainly driven by hydrophobic interactions) accompanied by the transfer of the N-terminal region to the lipid-water interface and finally pore formation after oligomerization of monomers. Cytolytic effects include red blood cells hemolysis, platelet aggregation and lysis, cytotoxic and cytostatic effects on fibroblasts. Lethality in mammals has been ascribed to severe vasospasm of coronary vessels, cardiac arrhythmia, and inotropic effects. This Actinia equina (Beadlet anemone) protein is Equinatoxin-1''.